A 277-amino-acid chain; its full sequence is MKPSFSLPHFVNDQLDQFKISDKSFSSRLMLGTGKYKNLQDAINSINVSGANIVTVAIRRAQNTKNLGRTNLIDGLDWSKLWILPNTAGCESAEEAVRIASLGQEIVKKLGQFDNNFIKLEVIPDSRYLLPDPIGTLKAAEYLINKGFVVMPYIGADPVLAKQLENIGCATVMPLASPIGSGKGLRNLLNLKIIIENAKIPVIIDAGIGTPSEAGKVMELGASAVLVNTAIARAKNSQTMARAMSLAVESGRLTYIAGRMPISEKAEPSSPILGISK.

The Schiff-base intermediate with DXP role is filled by K119. 1-deoxy-D-xylulose 5-phosphate is bound by residues G180, 206-207 (AG), and 228-229 (NT).

Belongs to the ThiG family. As to quaternary structure, homotetramer. Forms heterodimers with either ThiH or ThiS.

It is found in the plastid. It localises to the chloroplast. The catalysed reaction is [ThiS sulfur-carrier protein]-C-terminal-Gly-aminoethanethioate + 2-iminoacetate + 1-deoxy-D-xylulose 5-phosphate = [ThiS sulfur-carrier protein]-C-terminal Gly-Gly + 2-[(2R,5Z)-2-carboxy-4-methylthiazol-5(2H)-ylidene]ethyl phosphate + 2 H2O + H(+). It participates in cofactor biosynthesis; thiamine diphosphate biosynthesis. Catalyzes the rearrangement of 1-deoxy-D-xylulose 5-phosphate (DXP) to produce the thiazole phosphate moiety of thiamine. Sulfur is provided by the thiocarboxylate moiety of the carrier protein ThiS. In vitro, sulfur can be provided by H(2)S. This is Thiazole synthase from Porphyra purpurea (Red seaweed).